A 177-amino-acid chain; its full sequence is Large ribosomal subunit protein uL6 (177 aa).

It belongs to the universal ribosomal protein uL6 family. As to quaternary structure, part of the 50S ribosomal subunit.

Its function is as follows. This protein binds to the 23S rRNA, and is important in its secondary structure. It is located near the subunit interface in the base of the L7/L12 stalk, and near the tRNA binding site of the peptidyltransferase center. The protein is Large ribosomal subunit protein uL6 of Shewanella amazonensis (strain ATCC BAA-1098 / SB2B).